We begin with the raw amino-acid sequence, 532 residues long: Membrane protein insertase YidC (532 aa).

5 helical membrane-spanning segments follow: residues 7–27 (FFIF…QSQM), 336–356 (LTIL…ITFI), 413–433 (GGFL…YMLI), 450–470 (LSSQ…MFFI), and 492–512 (PVIF…YYII).

This sequence belongs to the OXA1/ALB3/YidC family. Type 1 subfamily. As to quaternary structure, interacts with the Sec translocase complex via SecD. Specifically interacts with transmembrane segments of nascent integral membrane proteins during membrane integration.

The protein resides in the cell membrane. In terms of biological role, required for the insertion and/or proper folding and/or complex formation of integral membrane proteins into the membrane. Involved in integration of membrane proteins that insert both dependently and independently of the Sec translocase complex, as well as at least some lipoproteins. Aids folding of multispanning membrane proteins. This is Membrane protein insertase YidC from Buchnera aphidicola subsp. Acyrthosiphon pisum (strain APS) (Acyrthosiphon pisum symbiotic bacterium).